Consider the following 233-residue polypeptide: DnaA regulatory inactivator Hda (233 aa).

It belongs to the DnaA family. HdA subfamily. As to quaternary structure, the active form seems to be an ADP-bound monomer. Forms the RIDA complex (regulatory inactivation of DnaA) of ATP-DnaA, ADP-Hda and the DNA-loaded beta sliding clamp (dnaN).

In terms of biological role, mediates the interaction of DNA replication initiator protein DnaA with DNA polymerase subunit beta sliding clamp (dnaN). Stimulates hydrolysis of ATP-DnaA to ADP-DnaA, rendering DnaA inactive for reinitiation, a process called regulatory inhibition of DnaA or RIDA. This is DnaA regulatory inactivator Hda from Shigella boydii serotype 4 (strain Sb227).